The primary structure comprises 395 residues: uncharacterized protein (395 aa).

4 disordered regions span residues 1–121 (MLLP…TANS), 136–187 (MRMK…LDRN), 308–335 (QNNEDTIRKSVPPSREPGSKMMTVSKDE), and 365–395 (IQKFRKKYQKQLKKSQEEKKDDTKTAKNEGD). Over residues 13-28 (PKGEAKSLVARERKSQ) the composition is skewed to basic and acidic residues. The segment covering 64–73 (KSAKLRRKKS) has biased composition (basic residues). The segment covering 97-111 (SIEKKKEEMTSKLPE) has biased composition (basic and acidic residues). Residues 144–164 (TSRMATKSDSSLETMPESSHN) show a composition bias toward polar residues. Basic residues predominate over residues 170 to 179 (KSRKSQRTRG). Positions 365-377 (IQKFRKKYQKQLK) are enriched in basic residues. Residues 378-395 (KSQEEKKDDTKTAKNEGD) are compositionally biased toward basic and acidic residues.

This is an uncharacterized protein from Caenorhabditis elegans.